The primary structure comprises 299 residues: MSFTRQLTKNLTSFKVLAPFAAAVGSVGIAYQYSTSSIMNETGKTFTGNDEWIDLKLAKSWDTTHNTKHFVFELANQDDVSGLINASCLLTKFVTPKGNNVIRPYTPISDVDGKGSIEFVIKKYDGGKMSSHIHDLKPNDTLAFKGPVVKWKWEPNQYKSIALIGGGTGITPLYQLMHEITKNPEDKTKVNLFYGNLTEKDILIKKELDTIAEKHKDQVNVVYFLDKAPENWNGETGYISKEFLQSKLPGPGKDNKVFVCGPPGLYKALSGPKKSPTDQGEVEGALADLGYTKENVFKF.

Residues 13–35 (SFKVLAPFAAAVGSVGIAYQYST) traverse the membrane as a helical segment. The 105-residue stretch at 50-154 (DEWIDLKLAK…KGPVVKWKWE (105 aa)) folds into the FAD-binding FR-type domain. 157–192 (QYKSIALIGGGTGITPLYQLMHEITKNPEDKTKVNL) contacts FAD.

It belongs to the flavoprotein pyridine nucleotide cytochrome reductase family. It depends on FAD as a cofactor.

It localises to the mitochondrion outer membrane. It catalyses the reaction 2 Fe(III)-[cytochrome b5] + NADH = 2 Fe(II)-[cytochrome b5] + NAD(+) + H(+). Functionally, may mediate the reduction of outer membrane cytochrome b5. The polypeptide is NADH-cytochrome b5 reductase 2 (MCR1) (Debaryomyces hansenii (strain ATCC 36239 / CBS 767 / BCRC 21394 / JCM 1990 / NBRC 0083 / IGC 2968) (Yeast)).